Here is a 393-residue protein sequence, read N- to C-terminus: UDP-N-acetylglucosamine--N-acetylmuramyl-(pentapeptide) pyrophosphoryl-undecaprenol N-acetylglucosamine transferase (393 aa).

UDP-N-acetyl-alpha-D-glucosamine-binding positions include 15–17, asparagine 129, arginine 171, serine 211, and glutamine 322; that span reads TAG.

It belongs to the glycosyltransferase 28 family. MurG subfamily.

The protein localises to the cell membrane. The catalysed reaction is di-trans,octa-cis-undecaprenyl diphospho-N-acetyl-alpha-D-muramoyl-L-alanyl-D-glutamyl-meso-2,6-diaminopimeloyl-D-alanyl-D-alanine + UDP-N-acetyl-alpha-D-glucosamine = di-trans,octa-cis-undecaprenyl diphospho-[N-acetyl-alpha-D-glucosaminyl-(1-&gt;4)]-N-acetyl-alpha-D-muramoyl-L-alanyl-D-glutamyl-meso-2,6-diaminopimeloyl-D-alanyl-D-alanine + UDP + H(+). Its pathway is cell wall biogenesis; peptidoglycan biosynthesis. Cell wall formation. Catalyzes the transfer of a GlcNAc subunit on undecaprenyl-pyrophosphoryl-MurNAc-pentapeptide (lipid intermediate I) to form undecaprenyl-pyrophosphoryl-MurNAc-(pentapeptide)GlcNAc (lipid intermediate II). The sequence is that of UDP-N-acetylglucosamine--N-acetylmuramyl-(pentapeptide) pyrophosphoryl-undecaprenol N-acetylglucosamine transferase from Bifidobacterium longum (strain DJO10A).